The sequence spans 286 residues: D-tagatose-1,6-bisphosphate aldolase subunit KbaY (286 aa).

The active-site Proton donor is the aspartate 82. 2 residues coordinate Zn(2+): histidine 83 and histidine 180. A dihydroxyacetone phosphate-binding site is contributed by glycine 181. Histidine 208 provides a ligand contact to Zn(2+). Residues 209 to 211 and 230 to 233 contribute to the dihydroxyacetone phosphate site; these read GAS and NVAT.

This sequence belongs to the class II fructose-bisphosphate aldolase family. TagBP aldolase KbaY subfamily. In terms of assembly, homotetramer. Forms a complex with KbaZ. It depends on Zn(2+) as a cofactor.

It catalyses the reaction D-tagatofuranose 1,6-bisphosphate = D-glyceraldehyde 3-phosphate + dihydroxyacetone phosphate. The protein operates within carbohydrate metabolism; D-tagatose 6-phosphate degradation; D-glyceraldehyde 3-phosphate and glycerone phosphate from D-tagatose 6-phosphate: step 2/2. Its function is as follows. Catalytic subunit of the tagatose-1,6-bisphosphate aldolase KbaYZ, which catalyzes the reversible aldol condensation of dihydroxyacetone phosphate (DHAP or glycerone-phosphate) with glyceraldehyde 3-phosphate (G3P) to produce tagatose 1,6-bisphosphate (TBP). Requires KbaZ subunit for full activity and stability. The sequence is that of D-tagatose-1,6-bisphosphate aldolase subunit KbaY from Escherichia coli O17:K52:H18 (strain UMN026 / ExPEC).